A 63-amino-acid chain; its full sequence is MSKKCEICGKGVVFGVQYSHSHRQSKRTWSPNIRKIKAIVKGTPRTIHVCARCLRSGKVQRAI.

The protein belongs to the bacterial ribosomal protein bL28 family.

The sequence is that of Large ribosomal subunit protein bL28 from Clostridium kluyveri (strain NBRC 12016).